The following is a 785-amino-acid chain: Protein SEY1 (785 aa).

The segment at 1–31 (MASAAPINLRAQDTPYVPPTSLPTSSSQTGS) is disordered. The Cytoplasmic portion of the chain corresponds to 1–689 (MASAAPINLR…KRSTVASIAQ (689 aa)). Over residues 22-31 (LPTSSSQTGS) the composition is skewed to low complexity. The GB1/RHD3-type G domain occupies 61-281 (GFSYNIVAVF…SSDYLFKPAY (221 aa)). Residue 71-78 (GSQSTGKS) coordinates GTP. A coiled-coil region spans residues 458 to 482 (SWEEELELLRDEIRAVADQCRKDET). Residues 690–710 (IPYWIYGVLVVLGWNEAMLVL) traverse the membrane as a helical segment. Over 711–713 (FNP) the chain is Lumenal. Residues 714–734 (LYFAFLLLAMATSYIIAQLGL) form a helical membrane-spanning segment. Over 735-785 (VGPLFQVTRTVGSEIQRQATARLREHFSQPVLAEPVQVGPSRDREEVGQIQ) the chain is Cytoplasmic.

This sequence belongs to the TRAFAC class dynamin-like GTPase superfamily. GB1/RHD3 GTPase family. RHD3 subfamily.

The protein localises to the endoplasmic reticulum membrane. Its function is as follows. Cooperates with the reticulon proteins and tubule-shaping DP1 family proteins to generate and maintain the structure of the tubular endoplasmic reticulum network. Has GTPase activity, which is required for its function in ER organization. The polypeptide is Protein SEY1 (Laccaria bicolor (strain S238N-H82 / ATCC MYA-4686) (Bicoloured deceiver)).